We begin with the raw amino-acid sequence, 107 residues long: MQFSTTPTLEGQNIVEYCGVVTGEAILGANIFRDFFAGIRDIVGGRSGSYEKELRKAREIAFQELGEQAKALGADAVVGIDIDYETVGKDSSMLMVSVSGTAVKTRR.

This sequence belongs to the UPF0145 family.

The sequence is that of UPF0145 protein CKO_02237 from Citrobacter koseri (strain ATCC BAA-895 / CDC 4225-83 / SGSC4696).